The following is a 237-amino-acid chain: Myelin protein zero-like protein 3 (237 aa).

A signal peptide spans 1–32 (MQLARGTVGGRGCALFPLLSILVVQGARIVLS). The 117-residue stretch at 33–149 (LEISADAHVR…NIPLTELTVT (117 aa)) folds into the Ig-like V-type domain. The Extracellular segment spans residues 33–159 (LEISADAHVR…ERGFGTMLSS (127 aa)). Cys-53 and Cys-129 are joined by a disulfide. N-linked (GlcNAc...) asparagine glycosylation occurs at Asn-124. The helical transmembrane segment at 160–180 (VALLSILVFVPSAVVVILLLV) threads the bilayer. The Cytoplasmic portion of the chain corresponds to 181–237 (RMGRKATGVQKRSRSGYKKSSIEVSDDTDQEDSNDCMTRLCVRCAECLDSDYEEEAY).

It belongs to the myelin P0 protein family. Present in all tissues tested, including the skin. Present in the keratinocytes and sebocytes in the skin (at protein level).

It is found in the membrane. Functionally, mediates homophilic cell-cell adhesion. In Mus musculus (Mouse), this protein is Myelin protein zero-like protein 3 (Mpzl3).